The sequence spans 173 residues: Small ribosomal subunit protein uS7 (173 aa).

The protein belongs to the universal ribosomal protein uS7 family. As to quaternary structure, part of the 30S ribosomal subunit. Contacts proteins S9 and S11.

One of the primary rRNA binding proteins, it binds directly to 16S rRNA where it nucleates assembly of the head domain of the 30S subunit. Is located at the subunit interface close to the decoding center, probably blocks exit of the E-site tRNA. This chain is Small ribosomal subunit protein uS7, found in Orientia tsutsugamushi (strain Ikeda) (Rickettsia tsutsugamushi).